Reading from the N-terminus, the 1262-residue chain is Synaptopodin-2 (1262 aa).

Residues 1 to 174 form an interaction with VPS18 region; it reads MGTGDFICIS…PGSQEGHLVE (174 aa). One can recognise a PDZ domain in the interval 6–88; sequence FICISMTGGA…SLHLLIKRPT (83 aa). 2 stretches are compositionally biased toward polar residues: residues 89 to 105 and 246 to 260; these read SGTS…TNHQ and TSLT…SSGR. Disordered stretches follow at residues 89-114 and 239-276; these read SGTS…GPME and PAPE…TGLP. Residues Ser-304, Ser-323, and Ser-324 each carry the phosphoserine modification. The interval 323-363 is disordered; it reads SSEGTEQGEDQRSGKDQGRPHKHRARHARLRRSESLSEKQV. Thr-327 bears the Phosphothreonine mark. A compositionally biased stretch (basic and acidic residues) spans 331–341; sequence EDQRSGKDQGR. Basic residues predominate over residues 342–352; that stretch reads PHKHRARHARL. Residues 353–363 are compositionally biased toward basic and acidic residues; sequence RRSESLSEKQV. Residues 392-400 carry the Nuclear localization signal motif; the sequence is KKRRRRARK. Interaction with ACTN2 regions lie at residues 477-658, 659-922, and 899-1153; these read MEML…FYDS, SEQI…PPVA, and QSPT…NIEE. 2 disordered regions span residues 503–576 and 592–703; these read AQNE…GPQR and NQTA…SPNP. Ser-518, Ser-543, Ser-544, Ser-546, and Ser-549 each carry phosphoserine. F-actin binding regions lie at residues 530 to 658 and 659 to 801; these read TSYQ…FYDS and SEQI…VTAV. Residues 540 to 552 are compositionally biased toward low complexity; sequence RMQSSVSESSFQM. Residues 554–560 are interaction with YWHAB; sequence RSLGSVP. Phosphoserine; by PKA is present on Ser-558. Composition is skewed to polar residues over residues 558-569 and 592-606; these read SVPQQNGFSGVS and NQTA…SVTS. Ser-599 carries the phosphoserine modification. The interval 602 to 809 is interaction with YWHAB; it reads QSVTSPIPDF…AVSSIKIAQP (208 aa). Thr-605 carries the post-translational modification Phosphothreonine; by PKA and CaMK2. Phosphoserine is present on Ser-606. Pro residues-rich tracts occupy residues 609–625 and 639–650; these read PDFP…PPPE and AQPPPWPQPAPW. Residues 610 to 621 form an interaction with BAG3 region; it reads DFPAPPPYSAVS. The PPPY motif signature appears at 614-617; the sequence is PPPY. Tyr-617 is subject to Phosphotyrosine. Ser-621 carries the phosphoserine modification. The interval 659–914 is F-actin bundling activity; sequence SEQIASRDER…LPASWKYSSN (256 aa). Ser-700 and Ser-724 each carry phosphoserine. Disordered stretches follow at residues 741–799 and 833–868; these read MQSS…PQVT and VVSH…GMSG. Residues 745-898 are actin binding; it reads AKQKTPPPVA…DTVQAHTVRA (154 aa). Thr-749 is modified (phosphothreonine). Residues 756–782 are compositionally biased toward low complexity; the sequence is KPAVKTSSSSQPVAPVSPVWSPGVAPA. Residues Ser-772 and Ser-776 each carry the phosphoserine modification. Polar residues predominate over residues 786–799; it reads AFSTTNPPNPPQVT. Residues 808–1153 form an interaction with FLNC region; it reads QPTCPPARPA…EAFRPRNIEE (346 aa). Ser-900, Ser-904, and Ser-908 each carry phosphoserine. Residues 933–957 are disordered; that stretch reads LAAIKSQPPGAQASKTSKKKGKKPL. The tract at residues 999 to 1018 is interaction with ZYX; sequence PAMKQALPPRQADIGSPTNA. Residues Ser-1014, Ser-1055, and Ser-1090 each carry the phosphoserine modification.

The protein belongs to the synaptopodin family. As to quaternary structure, may self-associate in muscle cells under oxidative stress. Binds F-actin. Interacts with ACTN2; ACTN2 is proposed to anchor SYOP2 at Z lines in mature myocytes. Interacts with AKAP6, PPP3CA and CAMK2A. Interacts (phosphorylated form) with YWHAB; YWHAB competes with ACTN2 for interaction with SYNPO2. Interacts with KPNA2; mediating nuclear import of SYNOP2; dependent on interaction with YWHAB. Interacts with IPO13; may be implicated in SYNOP2 nuclear import. Interacts with ZYX, FLNC, ILK. Interacts with BAG3 (via WW 1 domain). May associate with the CASA complex consisting of HSPA8, HSPB8 and BAG3. Interacts with VPS18. In terms of processing, phosphorylated by PKA, and by CaMK2 at multiple sites. Dephosphorylated by calcineurin at Ser-558 and Thr-605; abrogating interaction with YWHAB and impairing nuclear import.

Its subcellular location is the nucleus. It is found in the cytoplasm. The protein localises to the cytoskeleton. It localises to the myofibril. The protein resides in the sarcomere. Its subcellular location is the z line. It is found in the cell junction. The protein localises to the focal adhesion. Its function is as follows. Has an actin-binding and actin-bundling activity. Can induce the formation of F-actin networks. At the sarcomeric Z lines is proposed to act as adapter protein that links nascent myofibers to the sarcolemma via ZYX and may play a role in early assembly and stabilization of the Z lines. Involved in autophagosome formation. May play a role in chaperone-assisted selective autophagy (CASA) involved in Z lines maintenance in striated muscle under mechanical tension; may link the client-processing CASA chaperone machinery to a membrane-tethering and fusion complex providing autophagosome membranes. Involved in regulation of cell migration. May be a tumor suppressor. This chain is Synaptopodin-2 (Synpo2), found in Rattus norvegicus (Rat).